The chain runs to 229 residues: Large ribosomal subunit protein uL1 (229 aa).

Belongs to the universal ribosomal protein uL1 family. In terms of assembly, part of the 50S ribosomal subunit.

Its function is as follows. Binds directly to 23S rRNA. The L1 stalk is quite mobile in the ribosome, and is involved in E site tRNA release. Protein L1 is also a translational repressor protein, it controls the translation of the L11 operon by binding to its mRNA. This chain is Large ribosomal subunit protein uL1, found in Clostridium botulinum (strain Loch Maree / Type A3).